We begin with the raw amino-acid sequence, 204 residues long: MSRGALIVFEGLDKSGKTTQCMNIMESIPSNTIKYLNFPQRSTVTGKMIDDYLTRKKTYNDHIVNLLFCANRWEFASFIQEQLEQGITLIVDRYAFSGVAYAAAKGASMTLSKSYESGLPKPDLVIFLESGSKEINRNVGEEIYEDVAFQQKVLQEYKKMIEEGDIHWQIISSEFEEDVKKELIKNIVIEAIHTVTGPVGQLWM.

Position 11–18 (11–18 (GLDKSGKT)) interacts with ATP.

This sequence belongs to the thymidylate kinase family.

It carries out the reaction dTMP + ATP = dTDP + ADP. Its pathway is pyrimidine metabolism; dTTP biosynthesis. This Bos taurus (Bovine) protein is Thymidylate kinase (TMK).